Reading from the N-terminus, the 135-residue chain is Putative nickel-responsive regulator (135 aa).

Ni(2+)-binding residues include His-79, His-90, His-92, and Cys-98.

Belongs to the transcriptional regulatory CopG/NikR family. It depends on Ni(2+) as a cofactor.

In terms of biological role, transcriptional regulator. The polypeptide is Putative nickel-responsive regulator (Dictyoglomus turgidum (strain DSM 6724 / Z-1310)).